A 481-amino-acid polypeptide reads, in one-letter code: O-acetyltransferase andG (481 aa).

This sequence belongs to the fumigaclavine B O-acetyltransferase family. Monomer.

It functions in the pathway secondary metabolite biosynthesis; terpenoid biosynthesis. Functionally, O-acetyltransferase; part of the gene cluster that mediates the biosynthesis of anditomin, a fungal meroterpenoid. The first step of the pathway is the synthesis of 3,5-dimethylorsellinic acid (DMOA) by the polyketide synthase andM. DMOA is then converted to the phthalide compound 5,7-dihydroxy-4,6-dimethylphthalide (DHDMP) by the cytochrome P450 monooxygenase andK, which is further prenylated by the prenyltransferase andD to yield farnesyl-DHDMP. Further epoxidation by the FAD-dependent monooxygenase andE leads to epoxyfarnesyl-DHDMP. The next step involves the terpene cyclase andB that converts epoxyfarnesyl-DHDMP into preandiloid A through opening of the epoxide ring followed by the cyclization of the farnesyl moiety. Preandiloid A is in turn oxidized at the C-3 hydroxyl group to yield preandiloid B by the dehydrogenase andC. The dioxygenase andA is solely responsible for the dehydrogenation of preandiloid B leading to the enone preandiloid C, as well as for the intriguing structural rearrangement to generate the bicyclo[2.2.2]octane core, transforming preandiloid C into andiconin. FAD-binding monooxygenase andJ then produces andilesin D which is reduced by dehydrogenase andI to yield andilesin A. Action of acetyltransferase andG followed by a spontaneous acetate elimination leads then to andilesin B, which is in turn substrate of the short chain dehydrogenase andH to yield andilesin C. Finally, the dioxygenase andF catalyzes the transformation of andilesin C to anditomin. The protein is O-acetyltransferase andG of Emericella variicolor (Aspergillus stellatus).